The primary structure comprises 74 residues: Somatostatin-2 (74 aa).

Positions 1-46 (ARGAGLLSQDWSAVEDLLAQMSLPEADAQREAEVVSVATGGRLNLE) are excised as a propeptide. Cysteines 63 and 74 form a disulfide.

The protein belongs to the somatostatin family.

The protein resides in the secreted. Functionally, somatostatin inhibits the release of somatotropin. The sequence is that of Somatostatin-2 (sst2) from Myoxocephalus scorpius (Shorthorn sculpin).